Here is a 180-residue protein sequence, read N- to C-terminus: MTTYGTNQKSSNDLAPKLEYITRGINQHKRSGLATRRPWKQMLDLGSFNFPRKLATVITRIRANTVYFQTNYTIVVLFSVFLSLIWNPFSLLVLLALLGAWLFLYFLRDEPLTVFDREIDHRIVLIIMSVITLSILFLTDAKLNIAVAIVAGALAVLSHAAVRKTEDLFQTDEETSLLNP.

4 consecutive transmembrane segments (helical) span residues 63–83, 84–104, 123–143, and 145–165; these read ANTVYFQTNYTIVVLFSVFLS, LIWNPFSLLVLLALLGAWLFL, IVLIIMSVITLSILFLTDAKL, and IAVAIVAGALAVLSHAAVRKT.

The protein belongs to the PRA1 family. As to quaternary structure, interacts with PRA1F2. Expressed in hypocotyls, leaf bases and shoot apex.

The protein resides in the endosome membrane. May be involved in both secretory and endocytic intracellular trafficking in the endosomal/prevacuolar compartments. This Arabidopsis thaliana (Mouse-ear cress) protein is PRA1 family protein F1 (PRA1F1).